Reading from the N-terminus, the 102-residue chain is Aspartyl/glutamyl-tRNA(Asn/Gln) amidotransferase subunit C (102 aa).

Belongs to the GatC family. As to quaternary structure, heterotrimer of A, B and C subunits.

The enzyme catalyses L-glutamyl-tRNA(Gln) + L-glutamine + ATP + H2O = L-glutaminyl-tRNA(Gln) + L-glutamate + ADP + phosphate + H(+). It carries out the reaction L-aspartyl-tRNA(Asn) + L-glutamine + ATP + H2O = L-asparaginyl-tRNA(Asn) + L-glutamate + ADP + phosphate + 2 H(+). In terms of biological role, allows the formation of correctly charged Asn-tRNA(Asn) or Gln-tRNA(Gln) through the transamidation of misacylated Asp-tRNA(Asn) or Glu-tRNA(Gln) in organisms which lack either or both of asparaginyl-tRNA or glutaminyl-tRNA synthetases. The reaction takes place in the presence of glutamine and ATP through an activated phospho-Asp-tRNA(Asn) or phospho-Glu-tRNA(Gln). The polypeptide is Aspartyl/glutamyl-tRNA(Asn/Gln) amidotransferase subunit C (Bordetella bronchiseptica (strain ATCC BAA-588 / NCTC 13252 / RB50) (Alcaligenes bronchisepticus)).